Here is an 83-residue protein sequence, read N- to C-terminus: Gas vesicle protein G (83 aa).

Belongs to the gas vesicle GvpG family. As to quaternary structure, gvpF to GvpM interact with each other in vitro, and may form multi-subunit complex(es).

The protein resides in the gas vesicle. Proteins GvpF to GvpM might be involved in nucleating gas vesicle formation. A minor component of the gas vesicle. Gas vesicles are hollow, gas filled proteinaceous nanostructures found in some microorganisms. They allow positioning of halobacteria at the optimal depth for growth in the poorly aerated, shallow brine pools of their habitat. In terms of biological role, expression of a 9.5 kb mc-vac DNA fragment containing 2 divergently transcribed regions (gvpD-gvpE-gvpF-gvpG-gvpH-gvpI-gvpJ-gvpK-gvpL-gvpM and gvpA-gvpC-gvpN-gvpO) allows H.volcanii to produce gas vesicles. The polypeptide is Gas vesicle protein G (Haloferax mediterranei (strain ATCC 33500 / DSM 1411 / JCM 8866 / NBRC 14739 / NCIMB 2177 / R-4) (Halobacterium mediterranei)).